A 701-amino-acid chain; its full sequence is Elongation factor G (701 aa).

Positions 8-291 constitute a tr-type G domain; sequence SRYRNIGIVA…AVIDYLPAPI (284 aa). Residues 17-24, 89-93, and 143-146 contribute to the GTP site; these read AHVDAGKT, DTPGH, and NKMD.

This sequence belongs to the TRAFAC class translation factor GTPase superfamily. Classic translation factor GTPase family. EF-G/EF-2 subfamily.

It is found in the cytoplasm. Its function is as follows. Catalyzes the GTP-dependent ribosomal translocation step during translation elongation. During this step, the ribosome changes from the pre-translocational (PRE) to the post-translocational (POST) state as the newly formed A-site-bound peptidyl-tRNA and P-site-bound deacylated tRNA move to the P and E sites, respectively. Catalyzes the coordinated movement of the two tRNA molecules, the mRNA and conformational changes in the ribosome. This Pseudomonas syringae pv. tomato (strain ATCC BAA-871 / DC3000) protein is Elongation factor G.